The following is a 446-amino-acid chain: Chromosomal replication initiator protein DnaA (446 aa).

The tract at residues 1–73 (MAAQLNELWQ…INSMKIITTK (73 aa)) is domain I, interacts with DnaA modulators. A domain II region spans residues 73–107 (KKYDIAFLISSEEALETDEDQETDTNNVNTDTSSS). Positions 108–324 (MLNPKYKFDS…GALIRIVAFS (217 aa)) are domain III, AAA+ region. 4 residues coordinate ATP: G152, G154, K155, and T156. Residues 325–446 (SLTNKEISVD…NEITKRFSPK (122 aa)) form a domain IV, binds dsDNA region.

Belongs to the DnaA family. As to quaternary structure, oligomerizes as a right-handed, spiral filament on DNA at oriC.

It localises to the cytoplasm. Functionally, plays an essential role in the initiation and regulation of chromosomal replication. ATP-DnaA binds to the origin of replication (oriC) to initiate formation of the DNA replication initiation complex once per cell cycle. Binds the DnaA box (a 9 base pair repeat at the origin) and separates the double-stranded (ds)DNA. Forms a right-handed helical filament on oriC DNA; dsDNA binds to the exterior of the filament while single-stranded (ss)DNA is stabiized in the filament's interior. The ATP-DnaA-oriC complex binds and stabilizes one strand of the AT-rich DNA unwinding element (DUE), permitting loading of DNA polymerase. After initiation quickly degrades to an ADP-DnaA complex that is not apt for DNA replication. Binds acidic phospholipids. The polypeptide is Chromosomal replication initiator protein DnaA (Clostridium acetobutylicum (strain ATCC 824 / DSM 792 / JCM 1419 / IAM 19013 / LMG 5710 / NBRC 13948 / NRRL B-527 / VKM B-1787 / 2291 / W)).